Reading from the N-terminus, the 409-residue chain is Elongation factor Tu (409 aa).

In terms of domain architecture, tr-type G spans Lys10–Glu214. A G1 region spans residues Gly19 to Thr26. GTP is bound at residue Gly19–Thr26. Thr26 contacts Mg(2+). Positions Gly60–Asn64 are G2. The G3 stretch occupies residues Asp81–Gly84. GTP-binding positions include Asp81–His85 and Asn136–Asp139. The interval Asn136–Asp139 is G4. Positions Ser174 to Leu176 are G5.

The protein belongs to the TRAFAC class translation factor GTPase superfamily. Classic translation factor GTPase family. EF-Tu/EF-1A subfamily. As to quaternary structure, monomer.

The protein localises to the cytoplasm. It catalyses the reaction GTP + H2O = GDP + phosphate + H(+). Functionally, GTP hydrolase that promotes the GTP-dependent binding of aminoacyl-tRNA to the A-site of ribosomes during protein biosynthesis. The protein is Elongation factor Tu of Synechococcus sp. (strain JA-2-3B'a(2-13)) (Cyanobacteria bacterium Yellowstone B-Prime).